The following is an 803-amino-acid chain: Homeobox protein Wariai (803 aa).

Residues 23-41 (SDYDSYEQQYNNPTGSKQY) are compositionally biased toward polar residues. The disordered stretch occupies residues 23 to 144 (SDYDSYEQQY…PTPYSSNSFS (122 aa)). A compositionally biased stretch (low complexity) spans 42 to 124 (NNNNNNNTNT…NNNNNNNNNN (83 aa)). Residues 125 to 138 (QHLSQSQQLSPTPY) show a composition bias toward polar residues. Residues 162 to 221 (SKKKRKRTSPDQLKLLEKIFMAHQHPNLNLRSQLAVELHMTARSVQIWFQNRRAKARNME) constitute a DNA-binding region (homeobox). The disordered stretch occupies residues 288-330 (INGNMGGGGGGGGGSHNHHHHNHNHNHHNHNHNHNHNQPLSNG). Positions 291–302 (NMGGGGGGGGGS) are enriched in gly residues. Basic residues predominate over residues 303–322 (HNHHHHNHNHNHHNHNHNHN). ANK repeat units lie at residues 374 to 403 (KGLS…NPNI), 407 to 436 (QGNT…DPNL), 440 to 469 (EGVS…EVSV), 474 to 503 (NGET…KASV), 507 to 536 (NNRT…DMNA), 540 to 569 (DGHT…DPNI), 573 to 602 (EGYT…KLNI), 606 to 636 (NGQN…EIAA), and 642 to 671 (QGYT…SKKI). The segment at 695-760 (KSSNNNNSNS…PPGNKFEEDD (66 aa)) is disordered. Residues 696-746 (SSNNNNSNSNINNINNINNINNINSQPNTNSDNNNNNNNNNFNENYSNGNN) show a composition bias toward low complexity.

It localises to the nucleus. Putative transcription factor, that seems to be involved in anterior-posterior patterning of the slug, probably by controlling the proportions of prestalk and prespore cells. The protein is Homeobox protein Wariai (warA) of Dictyostelium discoideum (Social amoeba).